An 855-amino-acid polypeptide reads, in one-letter code: MKELTDKSILNHTPMMQQYWQIKAQHSDVLLFYRMGDFYELFYEDAKLASQLIDISLTKRGFSAGEPIPMAGIPYHALDSYLAKLVALGKSVAICEQVGEPTINKGPVERRVVRIVTPGTLSDEVLLNERQDNLLAAMLQDKQGFGYATLDITSGRFIVSEPKDFEAMAAELQRTNPAELLYPDTQHNLALIEHRRGLRRRPIWEFELDTACQQLMIQFGTSSLKGFGIECAHLALRAAGCLLQYAKDTQRTAMPHISTITLERQEDYVVMDAATMRNLELTHNLSGGIEHTLVAVLDHTVTSMGSRMLKRWLQMPTKHLTTIENRQQSIYFLQGKFDILQPILRKIGDLERILARLALRSARPRDLARIRNALQQLPDIQSLLADNTSGMHLSQLLSNVGYFDNLCQLLERAIVISPSALLRDGGIIATGYNLELDELRALANNATDYLDILEMKERKHTGLETLKIGFNAVHGYFIQLSREQSHRAPKRYIRRQTLKHVERYIIPELKEYEDKVITSKSKALSLEKKLYDALLDMLLPYLTQLQLSATALAELDVLSNLAERADTLHYVCPMINNQPIINIIDGRHPVVEPLMSKPFIANTLSLSDQNHMIIITGPNMGGKSTYMRQNALIVLLAYIGSFVPASQAIIGPIDRIFTRIGAADDLVSGRSTFMVEMTETANILHNATCQSLVLMDEIGRGTSTYDGLSLAWACAESLASRIKAMTLFATHYFELTTLPNKIKGIVNAHFAAIEYNDTIAFMHSIQNGAANKSYGLSVASLAGIPRDVIKCASRKLHELENLSNNIALTTPLSSRSLPQFTQETSPVIQALQEIDPDSLSPRQALDLLYSLKQMI.

617–624 is a binding site for ATP; it reads GPNMGGKS.

This sequence belongs to the DNA mismatch repair MutS family.

Functionally, this protein is involved in the repair of mismatches in DNA. It is possible that it carries out the mismatch recognition step. This protein has a weak ATPase activity. The polypeptide is DNA mismatch repair protein MutS (Baumannia cicadellinicola subsp. Homalodisca coagulata).